Here is an 815-residue protein sequence, read N- to C-terminus: Probable oligoxyloglucan-reducing end-specific xyloglucanase (815 aa).

Residues 1-19 (MKFWLQQLGLAVLCASSAA) form the signal peptide. The active-site Nucleophile is the aspartate 58. N-linked (GlcNAc...) asparagine glycosylation occurs at asparagine 113. The stretch at 118 to 128 (FVSNDRGATFT) is one BNR 1 repeat. Residue asparagine 180 is glycosylated (N-linked (GlcNAc...) asparagine). A BNR 2 repeat occupies 218-228 (YYTTDGGKNWE). N-linked (GlcNAc...) asparagine glycans are attached at residues asparagine 246, asparagine 290, and asparagine 304. A BNR 3 repeat occupies 351 to 361 (YLSRDGGKTWK). A glycan (N-linked (GlcNAc...) asparagine) is linked at asparagine 387. Aspartate 489 acts as the Proton donor in catalysis. The BNR 4 repeat unit spans residues 545–555 (YSTDGGSEWTK). Residues asparagine 564 and asparagine 603 are each glycosylated (N-linked (GlcNAc...) asparagine). The BNR 5 repeat unit spans residues 649–658 (YVSTDGGLSY). N-linked (GlcNAc...) asparagine glycosylation is present at asparagine 662. BNR repeat units lie at residues 696 to 706 (YHTTDFGKRWK) and 749 to 759 (YRSDDNGSTWD). Residue asparagine 754 is glycosylated (N-linked (GlcNAc...) asparagine).

The protein belongs to the glycosyl hydrolase 74 family.

It localises to the secreted. The enzyme catalyses Hydrolysis of cellobiose from the reducing end of xyloglucans consisting of a beta-(1-&gt;4)-linked glucan carrying alpha-D-xylosyl groups on O-6 of the glucose residues. To be a substrate, the first residue must be unsubstituted, the second residue may bear a xylosyl group, whether further glycosylated or not, and the third residue, which becomes the new terminus by the action of the enzyme, is preferably xylosylated, but this xylose residue must not be further substituted.. In terms of biological role, oligoxyloglucan-reducing end-specific xyloglucanase involved in degradation of xyloglucans. Releases the first two glycosyl segments from oligoxyloglucans. Active against cotton xyloglucan, tamarind xyloglucan and tamarind xyloglucan oligomers. The chain is Probable oligoxyloglucan-reducing end-specific xyloglucanase (xgcA) from Neosartorya fischeri (strain ATCC 1020 / DSM 3700 / CBS 544.65 / FGSC A1164 / JCM 1740 / NRRL 181 / WB 181) (Aspergillus fischerianus).